The following is a 599-amino-acid chain: Laccase-15 (599 aa).

A signal peptide spans 1–29; it reads MKRCQSSRPTAAVAAVVAAVSMIIVLVSG. 2 Plastocyanin-like domains span residues 46–162 and 173–328; these read VVSQ…PRHG and REVP…YSSN. 2 N-linked (GlcNAc...) asparagine glycosylation sites follow: Asn51 and Asn92. The Cu cation site is built by His96 and His98. Asn124 is a glycosylation site (N-linked (GlcNAc...) asparagine). Cu cation contacts are provided by His141 and His143. N-linked (GlcNAc...) asparagine glycans are attached at residues Asn193, Asn217, Asn331, Asn355, Asn412, and Asn454. The Plastocyanin-like 3 domain maps to 444–586; it reads ELAERPPRAY…AAVFIVEDGP (143 aa). Asn503, His506, His508, His565, Cys566, His567, His571, and Met576 together coordinate Cu cation.

This sequence belongs to the multicopper oxidase family. Requires Cu cation as cofactor.

Its subcellular location is the secreted. The protein localises to the extracellular space. It localises to the apoplast. It carries out the reaction 4 hydroquinone + O2 = 4 benzosemiquinone + 2 H2O. Its function is as follows. Lignin degradation and detoxification of lignin-derived products. The protein is Laccase-15 (LAC15) of Oryza sativa subsp. japonica (Rice).